We begin with the raw amino-acid sequence, 165 residues long: Pyruvoyl-dependent arginine decarboxylase (165 aa).

Serine 53 carries the post-translational modification Pyruvic acid (Ser).

It belongs to the PdaD family. Pyruvate serves as cofactor.

The catalysed reaction is L-arginine + H(+) = agmatine + CO2. The protein is Pyruvoyl-dependent arginine decarboxylase of Methanococcus aeolicus (strain ATCC BAA-1280 / DSM 17508 / OCM 812 / Nankai-3).